Consider the following 124-residue polypeptide: Ribonuclease P protein subunit p14 (124 aa).

Belongs to the eukaryotic/archaeal RNase P protein component 2 family. RNase P consists of a catalytic RNA moiety and about 10 protein subunits; POP1, POP4, POP5, POP7, RPP14, RPP21, RPP25, RPP30, RPP38 and RPP40. Within the RNase P complex, POP1, POP7 and RPP25 form the 'finger' subcomplex, POP5, RPP14, RPP40 and homodimeric RPP30 form the 'palm' subcomplex, and RPP21, POP4 and RPP38 form the 'wrist' subcomplex. All subunits of the RNase P complex interact with the catalytic RNA.

It is found in the nucleus. The protein localises to the nucleolus. Functionally, component of ribonuclease P, a ribonucleoprotein complex that generates mature tRNA molecules by cleaving their 5'-ends. In Homo sapiens (Human), this protein is Ribonuclease P protein subunit p14 (RPP14).